Reading from the N-terminus, the 205-residue chain is Nuclear transcription factor Y subunit C-6 (205 aa).

Positions 1 to 24 (MEPKSTTPPPPPPPPVLGAPVPYP) are disordered.

It belongs to the NFYC/HAP5 subunit family. In terms of assembly, heterotrimeric transcription factor composed of three components, NF-YA, NF-YB and NF-YC. NF-YB and NF-YC must interact and dimerize for NF-YA association and DNA binding. Interacts with NFYB2. Interacts with NFYB8, NFYB10 and HD5/NFYB11.

It localises to the nucleus. The protein resides in the cytoplasm. Component of the NF-Y/HAP transcription factor complex. This is Nuclear transcription factor Y subunit C-6 from Oryza sativa subsp. japonica (Rice).